Consider the following 442-residue polypeptide: Exodeoxyribonuclease 7 large subunit (442 aa).

The protein belongs to the XseA family. In terms of assembly, heterooligomer composed of large and small subunits.

It localises to the cytoplasm. The enzyme catalyses Exonucleolytic cleavage in either 5'- to 3'- or 3'- to 5'-direction to yield nucleoside 5'-phosphates.. Its function is as follows. Bidirectionally degrades single-stranded DNA into large acid-insoluble oligonucleotides, which are then degraded further into small acid-soluble oligonucleotides. The protein is Exodeoxyribonuclease 7 large subunit of Shewanella loihica (strain ATCC BAA-1088 / PV-4).